The sequence spans 322 residues: ATP-dependent 6-phosphofructokinase (322 aa).

Position 11 (glycine 11) interacts with ATP. Position 21 to 25 (21 to 25) interacts with ADP; that stretch reads RAVVR. ATP is bound by residues 72-73 and 102-105; these read RC and GDGS. Aspartate 103 serves as a coordination point for Mg(2+). Position 127–129 (127–129) interacts with substrate; sequence TID. Aspartate 129 functions as the Proton acceptor in the catalytic mechanism. Arginine 156 contacts ADP. Substrate is bound by residues arginine 164 and 171-173; that span reads MGR. Residues 187–189, arginine 213, and 215–217 contribute to the ADP site; these read GAE and KKH. Residues glutamate 224, arginine 245, and 251 to 254 each bind substrate; that span reads HIQR.

This sequence belongs to the phosphofructokinase type A (PFKA) family. ATP-dependent PFK group I subfamily. Prokaryotic clade 'B1' sub-subfamily. In terms of assembly, homotetramer. Mg(2+) serves as cofactor.

Its subcellular location is the cytoplasm. It catalyses the reaction beta-D-fructose 6-phosphate + ATP = beta-D-fructose 1,6-bisphosphate + ADP + H(+). It participates in carbohydrate degradation; glycolysis; D-glyceraldehyde 3-phosphate and glycerone phosphate from D-glucose: step 3/4. Allosterically activated by ADP and other diphosphonucleosides, and allosterically inhibited by phosphoenolpyruvate. Catalyzes the phosphorylation of D-fructose 6-phosphate to fructose 1,6-bisphosphate by ATP, the first committing step of glycolysis. In Staphylococcus carnosus (strain TM300), this protein is ATP-dependent 6-phosphofructokinase.